The following is a 484-amino-acid chain: Acid alpha-amylase (484 aa).

N-linked (GlcNAc...) asparagine glycosylation occurs at N24. The cysteines at positions 30 and 38 are disulfide-linked. Residue W83 coordinates substrate. A Ca(2+)-binding site is contributed by D121. H122 serves as a coordination point for substrate. C150 and C164 are joined by a disulfide. N157 carries an N-linked (GlcNAc...) asparagine glycan. Residues E162 and D175 each contribute to the Ca(2+) site. N-linked (GlcNAc...) asparagine glycosylation is present at N197. Position 204 (R204) interacts with substrate. Ca(2+) is bound by residues D206, E210, and E230. D206 acts as the Nucleophile in catalysis. Position 209-210 (209-210 (LE)) interacts with substrate. The active-site Proton donor is the E230. Residue G234 coordinates substrate. An intrachain disulfide couples C240 to C283. Substrate contacts are provided by D297 and R344. C440 and C475 are joined by a disulfide.

This sequence belongs to the glycosyl hydrolase 13 family. As to quaternary structure, monomer. Requires Ca(2+) as cofactor.

It is found in the secreted. It catalyses the reaction Endohydrolysis of (1-&gt;4)-alpha-D-glucosidic linkages in polysaccharides containing three or more (1-&gt;4)-alpha-linked D-glucose units.. The sequence is that of Acid alpha-amylase from Aspergillus niger.